Here is a 591-residue protein sequence, read N- to C-terminus: NADP-dependent malic enzyme (591 aa).

Over residues 1–10 (MESTLKEMRD) the composition is skewed to basic and acidic residues. The interval 1–26 (MESTLKEMRDGASVLDMDPKSTVGGG) is disordered. The active-site Proton donor is the Tyr-139. Position 192 (Arg-192) interacts with NAD(+). Lys-210 acts as the Proton acceptor in catalysis. Positions 282, 283, and 306 each coordinate a divalent metal cation. Asp-306 contacts NAD(+). An NADP(+)-binding site is contributed by 335 to 351 (LFLGAGEAGTGIAELIA). Asn-447 is a binding site for NAD(+).

It belongs to the malic enzymes family. As to quaternary structure, homotetramer. It depends on Mg(2+) as a cofactor. Mn(2+) is required as a cofactor. In terms of tissue distribution, mRNA found twofold higher in leaves and stems than in roots.

Its subcellular location is the cytoplasm. It carries out the reaction (S)-malate + NADP(+) = pyruvate + CO2 + NADPH. It catalyses the reaction oxaloacetate + H(+) = pyruvate + CO2. The protein is NADP-dependent malic enzyme of Populus trichocarpa (Western balsam poplar).